The primary structure comprises 72 residues: GFYFRSIQGFYFKRIQGNICSEPKKVGRCRESFPRFYFDSETGKCTPFIYGGCGGNGNNFETLHACRAICRA.

The signal sequence occupies residues 1 to 9; the sequence is GFYFRSIQG. Positions 10 to 17 are excised as a propeptide; the sequence is FYFKRIQG. The BPTI/Kunitz inhibitor domain maps to 20–70; the sequence is CSEPKKVGRCRESFPRFYFDSETGKCTPFIYGGCGGNGNNFETLHACRAIC. Disulfide bonds link Cys20-Cys70, Cys29-Cys53, and Cys45-Cys66.

Belongs to the venom Kunitz-type family. Sea anemone type 2 potassium channel toxin subfamily.

The protein resides in the secreted. The protein localises to the nematocyst. Functionally, serine protease inhibitor that acts on trypsin (Ki=190 nM) and to elastase. Does not bind to alpha-chymotrypsin, cathepsin G, and kallikrein. It significantly increases neuroblastoma cell viability in an in vitro neurotoxicity model, being a consequence of an effective decrease of reactive oxygen species (ROS) level in the cells. It also protects cells by inhibiting ATP-induced purinoceptor activation. Its binding affinity to P2RX7 is moderate (Kd=45.5 uM). The sequence is that of PI-stichotoxin-Hcr2j from Radianthus crispa (Leathery sea anemone).